We begin with the raw amino-acid sequence, 567 residues long: Malate synthase (567 aa).

Catalysis depends on arginine 177, which acts as the Proton acceptor. Aspartate 466 functions as the Proton donor in the catalytic mechanism. A Microbody targeting signal motif is present at residues 565-567; sequence CKL.

The protein belongs to the malate synthase family.

The protein localises to the glyoxysome. It carries out the reaction glyoxylate + acetyl-CoA + H2O = (S)-malate + CoA + H(+). It functions in the pathway carbohydrate metabolism; glyoxylate cycle; (S)-malate from isocitrate: step 2/2. This Oryza sativa subsp. japonica (Rice) protein is Malate synthase.